Reading from the N-terminus, the 360-residue chain is 1-aminocyclopropane-1-carboxylate oxidase homolog 6 (360 aa).

In terms of domain architecture, Fe2OG dioxygenase spans lysine 208–serine 309. The Fe cation site is built by histidine 232, aspartate 234, and histidine 288. Residue arginine 299 participates in 2-oxoglutarate binding.

Belongs to the iron/ascorbate-dependent oxidoreductase family. Fe(2+) is required as a cofactor. Constitutively expressed in leaves and blades.

This is 1-aminocyclopropane-1-carboxylate oxidase homolog 6 from Arabidopsis thaliana (Mouse-ear cress).